The sequence spans 421 residues: D-inositol 3-phosphate glycosyltransferase (421 aa).

His-9 provides a ligand contact to 1D-myo-inositol 3-phosphate. Residues 15 to 16 and Gly-23 contribute to the UDP-N-acetyl-alpha-D-glucosamine site; that span reads QP. 1D-myo-inositol 3-phosphate contacts are provided by residues 20–25, Lys-78, Tyr-110, Thr-134, and Arg-154; that span reads DAGGMN. 3 residues coordinate UDP-N-acetyl-alpha-D-glucosamine: Arg-231, Lys-236, and Arg-294. Positions 303, 304, and 306 each coordinate Mg(2+). UDP-N-acetyl-alpha-D-glucosamine contacts are provided by Glu-316 and Glu-324. Thr-330 is a binding site for Mg(2+).

Belongs to the glycosyltransferase group 1 family. MshA subfamily. Homodimer.

It catalyses the reaction 1D-myo-inositol 3-phosphate + UDP-N-acetyl-alpha-D-glucosamine = 1D-myo-inositol 2-acetamido-2-deoxy-alpha-D-glucopyranoside 3-phosphate + UDP + H(+). Functionally, catalyzes the transfer of a N-acetyl-glucosamine moiety to 1D-myo-inositol 3-phosphate to produce 1D-myo-inositol 2-acetamido-2-deoxy-glucopyranoside 3-phosphate in the mycothiol biosynthesis pathway. The sequence is that of D-inositol 3-phosphate glycosyltransferase from Corynebacterium aurimucosum (strain ATCC 700975 / DSM 44827 / CIP 107346 / CN-1) (Corynebacterium nigricans).